The primary structure comprises 490 residues: MQTTTLNWDTVYAVPIDIVNEAIKFKHPTPEQFELLDGKYGDCKGSFQEWQIISGGDGGNIRLKIPIKNFKANVIGKYLSGTGGFESANLEIQVKLKYLPHFPKSKNKNEELVDLKIRTKSNNAEDPAIIIIPTSEDVKGFYFNEDVRSLLMTEDDQFIMNYFHRLIKEWLERNLYFFNYVFNTVNLNLYISNNEKWKWTKPSYVDYAYSEIDEDLSKSILGVLCMTDGRKGSKNQQQKIDPNAIPKTSQSGFLISEDRLLKNILLPTIPKKFPKSKGDEFEVVNQSAQGGTYSYILKLKEGKKINLDNINACGYTCTPYIQEMKVSLLGNYLRLESTTRVDLPLGVSSICETMCEYRFKLDKNDKGEQTIAYEQIGSPTNKQYTEKTQDVSFEIIKGLLIATLGFVLELVPGIGSFLAVALIGGTLVGSISLIPNFIENYNVNTAPSIDLSLENSVSEITWNSSDIFNLNYVALAGPLQLGGTLQVQNT.

This sequence belongs to the TULIP P47 family. Part of a crude toxin extract that includes BoNTA2/NTNH, P47, OrfX2 and OrfX3; OrfX1 was not detected. Shorter forms of this protein are seen in vivo.

In terms of biological role, part of a botulinum neurotoxin type A2 (BoNT) locus; may be part of a progenitor toxin complex required to protect BoNT during its passage through the host gastrointestinal tract. This chain is Protein OrfX3 (orfX3), found in Clostridium botulinum (strain Kyoto / Type A2).